The primary structure comprises 60 residues: Large ribosomal subunit protein bL32 (60 aa).

Residues 1 to 43 (MAVQQNRKTRSRRGMRRSHDALTGKTLSVDSTTGEKHLRHHVT) form a disordered region. A compositionally biased stretch (basic residues) spans 7–16 (RKTRSRRGMR).

Belongs to the bacterial ribosomal protein bL32 family.

In Saccharophagus degradans (strain 2-40 / ATCC 43961 / DSM 17024), this protein is Large ribosomal subunit protein bL32.